The primary structure comprises 365 residues: Metallophosphoesterase 1 homolog (365 aa).

Residues 10 to 30 traverse the membrane as a helical segment; the sequence is PILLAIILVVYNEYFIFFIAF. A divalent metal cation-binding residues include Asp-54, Asp-96, Asn-132, His-208, His-262, and His-264. The chain crosses the membrane as a helical span at residues 319-339; that stretch reads ILQIMVYIFGGIGIVILAFIL.

Belongs to the metallophosphoesterase superfamily. MPPE1 family. Mn(2+) serves as cofactor.

The protein resides in the endoplasmic reticulum-Golgi intermediate compartment membrane. It localises to the golgi apparatus. It is found in the cis-Golgi network membrane. Its function is as follows. Metallophosphoesterase required for transport of GPI-anchor proteins from the endoplasmic reticulum to the Golgi. Acts in lipid remodeling steps of GPI-anchor maturation by mediating the removal of a side-chain ethanolamine-phosphate (EtNP) from the second Man (Man2) of the GPI intermediate, an essential step for efficient transport of GPI-anchor proteins. The protein is Metallophosphoesterase 1 homolog of Caenorhabditis elegans.